Here is a 303-residue protein sequence, read N- to C-terminus: MSLLRITSSAHSSASSRLWRLGIFLLLSLPDSKGKAIWTAHLNITFQVGSRLISELGESGVFGNHSPLERVSGVVVLPEGWNQNACNPMTNFSRPGQTDPWLALIERGGCTFTRKINVAAEKGANGVIIYNYPGTGNKVFPMSHQGTENIVAVMIGNLKGMELLHLIQKGVYVKIIIEVGRMHMPWLSHYIMSLFTFLTATVAYLFLYCAWRPRGPNFSTRRQRQLKADVRKAIGKLQLRVLQEGDKELEPDEDNCVVCFDIYKPQDVVRILTCKHIFHKACIDPWLLAHRTCPMCKCDILQT.

Residues M1–G34 form the signal peptide. N-linked (GlcNAc...) asparagine glycosylation occurs at N43. Residues H65–I167 form the PA domain. The chain crosses the membrane as a helical span at residues W186 to Y208. Residues C256–K297 form an RING-type; atypical zinc finger.

It is found in the membrane. The polypeptide is RING finger protein 148 (RNF148) (Bos taurus (Bovine)).